Consider the following 357-residue polypeptide: IGF-like family receptor 1 (357 aa).

Residues 1-22 (MGPLRLLPTAVLLLAQAAPWEA) form the signal peptide. Residues 23–160 (SQHCGRLEYW…HKAPQQAWPS (138 aa)) are Extracellular-facing. The segment at 100–147 (IPSGSRGGTGRPCREPVPNKEPCPLTPGKSSILSSQEPSSPGIPSVSW) is disordered. A compositionally biased stretch (low complexity) spans 129–139 (SSILSSQEPSS). A helical membrane pass occupies residues 161–181 (LSFALFLVLVLLVTSAIILLA). Residues 182–357 (LQRHHRRLDQ…KLGSSGACLA (176 aa)) lie on the Cytoplasmic side of the membrane.

It is found in the cell membrane. In terms of biological role, probable cell membrane receptor for the IGF-like family protein IGFL. The protein is IGF-like family receptor 1 (IGFLR1) of Bos taurus (Bovine).